The chain runs to 211 residues: MSNSAKSPSGPVGDEGRRNYPMSAHTLVTQEQVWAATAKCAKKIAEDYRSFKLTTDNPLYLLCVLKGSFIFTADLARFLADEGVPVKVEFICASSYGTGVETSGQVRMLLDVRDSVENRHILIVEDIVDSAITLQYLMRFMLAKKPASLKTVVLLDKPSGRKVEVLVDYPVITIPHAFVIGYGMDYAESYRELRDICVLKKEYYEKPESKV.

The segment at 1–20 (MSNSAKSPSGPVGDEGRRNY) is disordered. GMP-binding positions include Lys-66, 125–133 (EDIVDSAIT), Lys-157, and Asp-185. Asp-129 acts as the Proton acceptor in catalysis. Residue Asp-185 coordinates Mg(2+).

The protein belongs to the purine/pyrimidine phosphoribosyltransferase family. Mg(2+) is required as a cofactor.

The protein localises to the cytoplasm. The enzyme catalyses IMP + diphosphate = hypoxanthine + 5-phospho-alpha-D-ribose 1-diphosphate. It carries out the reaction GMP + diphosphate = guanine + 5-phospho-alpha-D-ribose 1-diphosphate. It functions in the pathway purine metabolism; IMP biosynthesis via salvage pathway; IMP from hypoxanthine: step 1/1. In terms of biological role, converts guanine to guanosine monophosphate, and hypoxanthine to inosine monophosphate. Transfers the 5-phosphoribosyl group from 5-phosphoribosylpyrophosphate onto the purine. Plays a central role in the generation of purine nucleotides through the purine salvage pathway. The sequence is that of Hypoxanthine-guanine phosphoribosyltransferase from Leishmania donovani.